Consider the following 104-residue polypeptide: Fusaric acid biosynthesis protein 2 (104 aa).

It belongs to the YciI family.

The protein operates within mycotoxin biosynthesis. Its function is as follows. Part of the gene cluster that mediates the biosynthesis of fusaric acid, a mycotoxin with low to moderate toxicity to animals and humans, but with high phytotoxic properties. L-aspartate is suggested as fusaric acid amino acid precursor that is activated and further processed to O-acetyl-L-homoserine by cluster enzymes aspartate kinase FUB3 and homoserine O-acetyltransferase FUB5, as well as enzymes of the primary metabolism. The polyketide synthase (PKS) FUB1 generates the triketide trans-2-hexenal which is presumptively released by the hydrolase FUB4 and linked to the NRPS-bound amino acid precursor by NAD(P)-dependent dehydrogenase FUB6. FUB1, FUB4, and the non-canonical NRPS Fub8 may form an enzyme complex. Further processing of the NRPS-bound intermediate might be carried out by FUB6 and the sulfhydrylase FUB7, enabling a spontaneous electrocyclization to close the carbon backbone of fusaric acid. Dihydrofusaric acid is likely to be released via reduction by the thioester reductase (TR) domain of FUB8 whereupon the final oxidation to fusaric acid may (also) be performed by the FMN-dependent dehydrogenase FUB9. This is Fusaric acid biosynthesis protein 2 from Gibberella fujikuroi (strain CBS 195.34 / IMI 58289 / NRRL A-6831) (Bakanae and foot rot disease fungus).